The sequence spans 425 residues: Serine--tRNA ligase (425 aa).

Residue 232-234 (TSE) coordinates L-serine. ATP contacts are provided by residues 263–265 (RRE) and V279. E286 provides a ligand contact to L-serine. 350-353 (EVVS) provides a ligand contact to ATP. T387 lines the L-serine pocket.

This sequence belongs to the class-II aminoacyl-tRNA synthetase family. Type-1 seryl-tRNA synthetase subfamily. As to quaternary structure, homodimer. The tRNA molecule binds across the dimer.

It localises to the cytoplasm. It carries out the reaction tRNA(Ser) + L-serine + ATP = L-seryl-tRNA(Ser) + AMP + diphosphate + H(+). It catalyses the reaction tRNA(Sec) + L-serine + ATP = L-seryl-tRNA(Sec) + AMP + diphosphate + H(+). Its pathway is aminoacyl-tRNA biosynthesis; selenocysteinyl-tRNA(Sec) biosynthesis; L-seryl-tRNA(Sec) from L-serine and tRNA(Sec): step 1/1. In terms of biological role, catalyzes the attachment of serine to tRNA(Ser). Is also able to aminoacylate tRNA(Sec) with serine, to form the misacylated tRNA L-seryl-tRNA(Sec), which will be further converted into selenocysteinyl-tRNA(Sec). This Methanocella arvoryzae (strain DSM 22066 / NBRC 105507 / MRE50) protein is Serine--tRNA ligase.